The primary structure comprises 463 residues: Cysteine--tRNA ligase (463 aa).

Residue C29 participates in Zn(2+) binding. A 'HIGH' region motif is present at residues 31–41; the sequence is PTVYDFAHIGN. Zn(2+) contacts are provided by C227, H252, and E256. The 'KMSKS' region motif lies at 285–289; that stretch reads KMSKS. K288 is an ATP binding site.

The protein belongs to the class-I aminoacyl-tRNA synthetase family. In terms of assembly, monomer. Zn(2+) serves as cofactor.

The protein localises to the cytoplasm. It catalyses the reaction tRNA(Cys) + L-cysteine + ATP = L-cysteinyl-tRNA(Cys) + AMP + diphosphate. This is Cysteine--tRNA ligase from Rhodopseudomonas palustris (strain ATCC BAA-98 / CGA009).